The chain runs to 66 residues: MAKDAITGARTRFGNQRSHALNSSRRSWKPNLQKVTVKINGAAAKKVYLTARTLKAGLKNGSIERV.

A disordered region spans residues 1–26 (MAKDAITGARTRFGNQRSHALNSSRR). A compositionally biased stretch (polar residues) spans 13–25 (FGNQRSHALNSSR).

The protein belongs to the bacterial ribosomal protein bL28 family.

The polypeptide is Large ribosomal subunit protein bL28 (Leuconostoc citreum (strain KM20)).